The following is a 75-amino-acid chain: Peptide Ctri10036 (75 aa).

A signal peptide spans 1-22 (MNSKYLFVFLILNVIFIDLCQG). Lysine 41 is subject to Lysine amide. The propeptide occupies 47-75 (ELGSQYDYLQDFRKRELDLDDLLSKFPDY).

It belongs to the non-disulfide-bridged peptide (NDBP) superfamily. Short antimicrobial peptide (group 4) family. As to expression, expressed by the venom gland.

It localises to the secreted. The polypeptide is Peptide Ctri10036 (Chaerilus tricostatus (Scorpion)).